The sequence spans 268 residues: Zwei Ig domain protein zig-8 (268 aa).

A signal peptide spans 1–21; that stretch reads MRRFSNICVILFSFLYATGHG. Ig-like C2-type domains follow at residues 40-128 and 140-251; these read PSQT…NTVY and PSPS…NSAT. C57 and C118 form a disulfide bridge. N-linked (GlcNAc...) asparagine glycosylation is found at N82, N155, N164, and N191. An intrachain disulfide couples C165 to C226.

As to expression, expressed in PVT neurons and pharyngeal muscles.

The protein localises to the secreted. Together with zig-5, required postembryonically to maintain the position of ASI and ASH head neuron cell bodies and ventral nerve cord axons of PVQ, PVP and HSN neurons by preventing their displacement that could occur during body growth and movement. May act by reducing L1CAM-like protein sax-7 (long isoform) adhesion. The polypeptide is Zwei Ig domain protein zig-8 (Caenorhabditis elegans).